The following is a 1018-amino-acid chain: Fibronectin-binding protein A (1018 aa).

A signal peptide spans 1 to 36; that stretch reads MKNNLRYGIRKHKLGAASVFLGTMIVVGMGQDKEAA. A YSIRK-G/S signaling motif motif is present at residues 7-18; the sequence is YGIRKHKLGAAS. The tract at residues 37–511 is ligand-binding A region; it reads ASEQKTTTVE…SNKANGNEKN (475 aa). 2 disordered regions span residues 38–61 and 78–195; these read SEQK…SETQ and ATVT…ETGT. Composition is skewed to polar residues over residues 39 to 61 and 78 to 92; these read EQKT…SETQ and ATVT…QVTT. A compositionally biased stretch (basic and acidic residues) spans 112–126; the sequence is TVKEEVVKEEAKPQV. Over residues 129–139 the composition is skewed to polar residues; sequence TTQSQDNSGDQ. Residues 194–511 are fibrinogen/elastin/tropoelastin-binding; sequence GTDVTSKVTV…SNKANGNEKN (318 aa). Residues 512–872 are fibronectin-binding; the sequence is GPIIQNNKFE…EGQQTIEEDT (361 aa). One copy of the B-1 repeat lies at 545–574; sequence EEYDSSTLDIDYHTAIDGGGGYVDGYIETI. The interval 545–604 is 2 X approximate tandem repeats; it reads EEYDSSTLDIDYHTAIDGGGGYVDGYIETIEETDSSAIDIDYHTAVDSEAGHVGGYTESS. The stretch at 575 to 604 is one B-2 repeat; sequence EETDSSAIDIDYHTAVDSEAGHVGGYTESS. 3 disordered regions span residues 595–622, 740–813, and 827–997; these read GHVG…NSKH, LGYE…DIDF, and EIIE…GMLF. The stretch at 745–782 is one D-1 repeat; the sequence is GQNSGNQSFEEDTEEDKPKYEQGGNIVDIDFDSVPQIH. Residues 745–878 form a 4 X approximate tandem repeats, D-3 repeat has more fibronectin-binding activity region; the sequence is GQNSGNQSFE…EEDTTPPIVP (134 aa). The D-2 repeat unit spans residues 783–820; that stretch reads GQNKGNQSFEEDTEKDKPKYEHGGNIIDIDFDSVPHIH. The stretch at 821-859 is one D-3 repeat; sequence GFNKHTEIIEEDTNKDKPSYQFGGHNSVDFEEDTLPKVS. Basic and acidic residues predominate over residues 827-838; it reads EIIEEDTNKDKP. The stretch at 860–878 is one D-4; truncated repeat; sequence GQNEGQQTIEEDTTPPIVP. A compositionally biased stretch (pro residues) spans 875-938; sequence PIVPPTPPTP…PAEPGKPVPP (64 aa). WR repeat units follow at residues 879–892, 893–906, 907–920, 921–934, and 935–948; these read PTPP…EPET, PTPP…EPGK, and PVPP…KPSK. The 5 X tandem repeats, Pro-rich (WR) stretch occupies residues 879–948; sequence PTPPTPEVPS…AKEEPKKPSK (70 aa). The LPXTG sorting signal signature appears at 982-986; sequence LPETG. Threonine 985 is modified (pentaglycyl murein peptidoglycan amidated threonine). Residues 986-1018 constitute a propeptide, removed by sortase; it reads GGEESTNKGMLFGGLFSILGLALLRRNKKNHKA.

It is found in the secreted. The protein resides in the cell wall. Functionally, possesses multiple, substituting fibronectin (Fn) binding regions, each capable of conferring adherence to both soluble and immobilized forms of Fn. This confers to S.aureus the ability to invade endothelial cells both in vivo and in vitro, without requiring additional factors, although in a slow and inefficient way through actin rearrangements in host cells. This invasion process is mediated by integrin alpha-5/beta-1. Promotes bacterial attachment to both soluble and immobilized forms of fibrinogen (Fg) by means of a unique binding site localized within the 17 C-terminal residues of the gamma-chain of human Fg. Both plasma proteins (Fn and Fg) function as a bridge between bacterium and host cell. Promotes attachment to immobilized elastin peptides in a dose-dependent and saturable manner. Promotes attachment to both full-length and segments of immobilized human tropoelastin at multiple sites in a dose and pH-dependent manner. Promotes adherence to and aggregation of activated platelets independently of other S.aureus surface molecules. Is a critical mediator implicated in the induction of experimental endocarditis in rats with catheter-induced aortic vegetations, promoting both colonization and persistence of the bacterium into the host. This chain is Fibronectin-binding protein A (fnbA), found in Staphylococcus aureus (strain NCTC 8325 / PS 47).